Consider the following 129-residue polypeptide: M-zodatoxin-Lt8h (129 aa).

The N-terminal stretch at 1–20 (MKYFVVALALVAAFACIAES) is a signal peptide. The propeptide occupies 21 to 60 (KPAESEHELAEVEEENELADLEDAVWLEDLADLSDLEETR).

The protein belongs to the cationic peptide 06 (cytoinsectotoxin) family. As to expression, expressed by the venom gland.

The protein localises to the secreted. Insecticidal, cytolytic and antimicrobial peptide. Has insecticidal activity against the flesh fly S.carnaria. Has antibacterial activity against the Gram-negative bacteria E.coli. Forms voltage-dependent, ion-permeable channels in membranes. At high concentration causes cell membrane lysis. The protein is M-zodatoxin-Lt8h (cit 1-11) of Lachesana tarabaevi (Spider).